The following is a 355-amino-acid chain: Methylthioribose-1-phosphate isomerase (355 aa).

Substrate contacts are provided by residues 47 to 49 (RGA), Arg91, and Gln199. Catalysis depends on Asp240, which acts as the Proton donor. 250 to 251 (NK) is a binding site for substrate.

It belongs to the eIF-2B alpha/beta/delta subunits family. MtnA subfamily.

The enzyme catalyses 5-(methylsulfanyl)-alpha-D-ribose 1-phosphate = 5-(methylsulfanyl)-D-ribulose 1-phosphate. It functions in the pathway amino-acid biosynthesis; L-methionine biosynthesis via salvage pathway; L-methionine from S-methyl-5-thio-alpha-D-ribose 1-phosphate: step 1/6. Functionally, catalyzes the interconversion of methylthioribose-1-phosphate (MTR-1-P) into methylthioribulose-1-phosphate (MTRu-1-P). This chain is Methylthioribose-1-phosphate isomerase, found in Oleidesulfovibrio alaskensis (strain ATCC BAA-1058 / DSM 17464 / G20) (Desulfovibrio alaskensis).